We begin with the raw amino-acid sequence, 375 residues long: Deoxyhypusine synthase-like protein (375 aa).

Belongs to the deoxyhypusine synthase family.

The sequence is that of Deoxyhypusine synthase-like protein from Elusimicrobium minutum (strain Pei191).